The chain runs to 471 residues: GDP-mannose transporter (471 aa).

Over residues 1–13 the composition is skewed to polar residues; it reads MSSGSRSFFTPQE. A disordered region spans residues 1 to 52; the sequence is MSSGSRSFFTPQETRLELPQGAAHQTPDITRPASPSENDRAPFLNGGPSDAR. The Cytoplasmic portion of the chain corresponds to 1-70; the sequence is MSSGSRSFFT…ALRNDSEKPA (70 aa). The chain crosses the membrane as a helical span at residues 71-91; it reads VGIMALAPILCYCAASITMTV. The Lumenal segment spans residues 92–101; it reads VNKFTVSGRG. Residues 102 to 122 form a helical membrane-spanning segment; sequence FNMNLLVLLIQSTVGVTCVWI. Residues 123–139 are Cytoplasmic-facing; it reads AERAGLIQLRGLNAKDA. The helical transmembrane segment at 140-160 threads the bilayer; the sequence is WNWMPLSIMLVFVIWTGSKAL. Topologically, residues 161-166 are lumenal; that stretch reads QYLNIS. Residue N164 is glycosylated (N-linked (GlcNAc...) asparagine). The helical transmembrane segment at 167-187 threads the bilayer; that stretch reads VYTIFKNLTIILIAYGEVMWF. The Cytoplasmic portion of the chain corresponds to 188–193; it reads GGRVTR. Residues 194–214 traverse the membrane as a helical segment; it reads IVLCSFLFMVLSSVIAAWSDI. The Lumenal portion of the chain corresponds to 215–279; sequence SNVFAIGNLS…DVIEGFQGYG (65 aa). N222 is a glycosylation site (N-linked (GlcNAc...) asparagine). A helical transmembrane segment spans residues 280-300; the sequence is LLSSGYVWMALNCICSATYVL. Over 301–315 the chain is Cytoplasmic; sequence LMRKRIKVTGFKDWD. A helical membrane pass occupies residues 316–336; it reads TMFYNNFLSIPVLLLMSFLVE. Residues 337–354 are Lumenal-facing; sequence DWSYANLHKNFPDDKQTK. A helical transmembrane segment spans residues 355-375; the sequence is LISAIVFSGACAILISYTTAW. The Cytoplasmic segment spans residues 376-383; that stretch reads CIRATSST. The helical transmembrane segment at 384 to 404 threads the bilayer; the sequence is TYSMVGALNKLPVALSGMVFF. Residues 405-408 lie on the Lumenal side of the membrane; sequence HDPP. Residues 409 to 429 traverse the membrane as a helical segment; it reads VTFSSVSAIAVGFFAGLVYAF. Residues 430 to 471 are Cytoplasmic-facing; the sequence is GKNKQAEAAKLGGHASANGSSSMSGSKDGSSLPMHTFNDRKD. Residues 442–460 show a composition bias toward low complexity; sequence GHASANGSSSMSGSKDGSS. The disordered stretch occupies residues 442–471; the sequence is GHASANGSSSMSGSKDGSSLPMHTFNDRKD.

The protein belongs to the TPT transporter family. SLC35D subfamily. Homooligomer.

The protein resides in the golgi apparatus membrane. Its subcellular location is the cytoplasmic vesicle membrane. It localises to the endoplasmic reticulum membrane. Involved in the import of GDP-mannose from the cytoplasm into the Golgi lumen. This Mycosarcoma maydis (Corn smut fungus) protein is GDP-mannose transporter (VRG4).